We begin with the raw amino-acid sequence, 901 residues long: Phosphatidylinositol 3-kinase catalytic subunit type 3 (901 aa).

Residues 21–189 (LQTNVQVKVA…DLLFKQVTRQ (169 aa)) form the C2 PI3K-type domain. The region spanning 302 to 527 (RHRQVKPNKQ…SKMYQNIQDR (226 aa)) is the PIK helical domain. The PI3K/PI4K catalytic domain occupies 607–886 (IPDTASFFKS…QIESSLNAKM (280 aa)). The G-loop stretch occupies residues 613–619 (FFKSEMM). Positions 755-763 (GLGDRHLDN) are catalytic loop. An activation loop region spans residues 774–795 (HVDFGFILGRDPKPMPPPMKLT).

It belongs to the PI3/PI4-kinase family. In terms of assembly, interacts with bec-1. May interact with dyn-1. Requires Mn(2+) as cofactor. In terms of tissue distribution, ubiquitous.

It is found in the nucleus outer membrane. Its subcellular location is the cytoplasm. The protein resides in the cytoplasmic granule. It localises to the cell projection. The protein localises to the phagocytic cup. The catalysed reaction is a 1,2-diacyl-sn-glycero-3-phospho-(1D-myo-inositol) + ATP = a 1,2-diacyl-sn-glycero-3-phospho-(1D-myo-inositol-3-phosphate) + ADP + H(+). Its activity is regulated as follows. Inhibited by wortmannin. Catalytic subunit of the PI3K complex that mediates formation of phosphatidylinositol 3-phosphate. Together with bec-1, mediates the production of phosphatidylinositol 3-phosphate on intracellular vesicles and thereby regulates membrane trafficking. Plays a role in endosome-to-Golgi retrograde transport of mig-14. Involved in clearance of apoptotic cell corpses by phagosomes. Phagosome maturation requires two sequential and non-overlapping pulses of phosphatidylinositol-3-phosphate (PI3P) on the vesicle surface which mediates recruitment of sortins snx-1 and lst-4 and small GTPases rab-5, rab-2 and rab-7, downstream of dynamin dyn-1. The first pulse is initiated by piki-1, then maintained by vps-34 which also produces the second pulse. Required for embryonic development. Together with bec-1, involved in L3/L4 larval molting stage probably by regulating cuticle shedding. Regulates the expansion of the nucleus outer membrane. Involved in the secretion and localization of lrp-1 at the apical surface of hyp7 syncytium. May regulate endocytosis in hypodermal cells. May play a role in the formation of gut granules (a lysosome-related organelle). Plays a role in germ stem cell proliferation during larval development. The chain is Phosphatidylinositol 3-kinase catalytic subunit type 3 from Caenorhabditis elegans.